A 365-amino-acid chain; its full sequence is Inositol 4-methyltransferase (365 aa).

Residue D232 participates in S-adenosyl-L-methionine binding. The active-site Proton acceptor is the H270.

It belongs to the class I-like SAM-binding methyltransferase superfamily. Cation-independent O-methyltransferase family. Leaves and roots. The levels found in the leaves are 25 times greater than in the roots.

It catalyses the reaction myo-inositol + S-adenosyl-L-methionine = 1D-4-O-methyl-myo-inositol + S-adenosyl-L-homocysteine + H(+). The protein operates within polyol metabolism; myo-inositol metabolism. Catalyzes the methylation of myo-inositol into ononitol (1D-4-O-methyl myo-inositol), the first step in the biosynthesis of the cyclic sugar pinitol which has osmoprotective properties. The protein is Inositol 4-methyltransferase (IMT1) of Mesembryanthemum crystallinum (Common ice plant).